A 676-amino-acid polypeptide reads, in one-letter code: Beta-galactosidase BgaP (676 aa).

Position 112 (R112) interacts with substrate. A Zn(2+)-binding site is contributed by C116. Position 150 (N150) interacts with substrate. E151 functions as the Proton donor in the catalytic mechanism. Residues C156, C158, and C161 each coordinate Zn(2+). E308 (nucleophile) is an active-site residue. Substrate contacts are provided by residues W316 and 356-359 (EKYH).

Belongs to the glycosyl hydrolase 42 family. In terms of assembly, homodimer.

The catalysed reaction is Hydrolysis of terminal non-reducing beta-D-galactose residues in beta-D-galactosides.. With respect to regulation, no activity lost during treatment with 100 mM EDTA after 2 hours, and the addition of 1 mM MgCl(2), 1 mM CaCl(2) or 1 mM MnCl(2) has no effect. However, the enzyme activity is inhibited by Zn(2+), Cu(2+), Ni(2+) and Co(2+) to different extents. Addition of Na(+) or K(+) slightly stimulates the enzyme activity at low concentrations and the optimal concentration is 250 mM. A further increase of their concentration of ions above the optimum value results in a decrease in enzyme activity. The enzyme is still active even in the presence of Na(+) or K(+) at a concentration up to 5 M. Hydrolyzes lactose, o-nitrophenyl-beta-D-galactopyranoside (ONPG), p-nitrophenyl-beta-D-galactopyranoside (PNPG), 5-bromo-4-chloro-3-indolyl-beta-D-galactopyranoside (X-gal), o-nitrophenyl-beta-D-fucopyranoside, p-nitrophenyl-beta-D-mannoside, o-nitrophenyl-beta-D-glucoside, p-nitrophenyl-beta-D-xyloside, p-nitrophenyl-beta-D-cellobioside, p-nitrophenyl-beta-D-arabinoside, p-nitrophenyl-beta-D-lactoside, p-nitrophenyl-beta-D-galacturonide, p-nitrophenyl-beta-D-glucuronide and p-nitrophenyl-alpha-D-galactoside with highest level of activity with ONPG as substrate, intermediate level of activity with PNPG and lower levels of activity with all other chromogenic nitrophenyl analogs. Able to hydrolyze 34% of milk lactose after 60 minutes at 5 degrees Celsius. This Planococcus sp. (strain L4) protein is Beta-galactosidase BgaP.